A 317-amino-acid chain; its full sequence is Melanocyte-stimulating hormone receptor (317 aa).

At 1–37 (MPVQGSQRRLLGSLNSTPTATPKLGLAANQTGAWCLE) the chain is on the extracellular side. An N-linked (GlcNAc...) asparagine glycan is attached at Asn-29. Residues 38-63 (VSIPDGLFLSLGLVSLVENVLVVAAI) traverse the membrane as a helical segment. Over 64–72 (AKNRNLHSP) the chain is Cytoplasmic. A helical transmembrane segment spans residues 73–93 (MYCFICCLALSDLLVSGSNML). Residues 94-118 (ETAVILLLEAGALAARAAVVQQLDN) are Extracellular-facing. A helical transmembrane segment spans residues 119–140 (VIDVITCSSMLSSLCFLGAIAV). The Cytoplasmic portion of the chain corresponds to 141–163 (DRYISIFYALRYHSIVTLPRAQR). A helical membrane pass occupies residues 164–183 (VVAAIWVASVLFSTLFIAYY). Topologically, residues 184–191 (DHAAVLLC) are extracellular. Residues 192–211 (LVVFFLAMLVLMAVLYVHML) traverse the membrane as a helical segment. The Cytoplasmic portion of the chain corresponds to 212–240 (ARACQHAQGIAQLHKRQRPAHQGFGLKGA). A helical transmembrane segment spans residues 241-266 (ATLTILLGIFFLCWGPFFLHLTLIVL). At 267–279 (CPQHPTCSCIFKN) the chain is on the extracellular side. A helical transmembrane segment spans residues 280–300 (FNLFLALIICNAIIDPLIYAF). Over 301-317 (RSQELRRTLKEVLLCSW) the chain is Cytoplasmic. Residue Cys-315 is the site of S-palmitoyl cysteine attachment.

The protein belongs to the G-protein coupled receptor 1 family. Interacts with MGRN1, but does not undergo MGRN1-mediated ubiquitination; this interaction competes with GNAS-binding and thus inhibits agonist-induced cAMP production. Interacts with OPN3; the interaction results in a decrease in MC1R-mediated cAMP signaling and ultimately a decrease in melanin production in melanocytes.

It is found in the cell membrane. In terms of biological role, receptor for MSH (alpha, beta and gamma) and ACTH. The activity of this receptor is mediated by G proteins which activate adenylate cyclase. Mediates melanogenesis, the production of eumelanin (black/brown) and phaeomelanin (red/yellow), via regulation of cAMP signaling in melanocytes. This chain is Melanocyte-stimulating hormone receptor (MC1R), found in Colobus guereza (Mantled guereza).